The following is a 159-amino-acid chain: Probable metallophosphoesterase MPN_126 (159 aa).

Mn(2+) is bound by residues Asp9, His11, Asp34, Asn53, His75, His107, and His109.

Belongs to the metallophosphoesterase superfamily. YfcE family. It depends on Mn(2+) as a cofactor.

The sequence is that of Probable metallophosphoesterase MPN_126 from Mycoplasma pneumoniae (strain ATCC 29342 / M129 / Subtype 1) (Mycoplasmoides pneumoniae).